The primary structure comprises 310 residues: Elongation factor Ts (310 aa).

The segment at 80–83 (TDFV) is involved in Mg(2+) ion dislocation from EF-Tu.

This sequence belongs to the EF-Ts family.

The protein resides in the cytoplasm. In terms of biological role, associates with the EF-Tu.GDP complex and induces the exchange of GDP to GTP. It remains bound to the aminoacyl-tRNA.EF-Tu.GTP complex up to the GTP hydrolysis stage on the ribosome. The sequence is that of Elongation factor Ts from Beijerinckia indica subsp. indica (strain ATCC 9039 / DSM 1715 / NCIMB 8712).